The sequence spans 565 residues: Periplasmic trehalase (565 aa).

The signal sequence occupies residues 1-30; that stretch reads MKSPAPSRPQKMALIPACIFLCFAALSVQA. Substrate is bound by residues arginine 152, 159 to 160, asparagine 196, 205 to 207, 277 to 279, and glycine 310; these read WD, RSQ, and RPE. Residues aspartate 312 and glutamate 496 each act as proton donor/acceptor in the active site. Residue glutamate 511 coordinates substrate. Residues 539–565 form a disordered region; the sequence is CDNVPATRPLSESTTQPVKPKEAEPTL.

This sequence belongs to the glycosyl hydrolase 37 family. As to quaternary structure, monomer.

It localises to the periplasm. The enzyme catalyses alpha,alpha-trehalose + H2O = alpha-D-glucose + beta-D-glucose. Provides the cells with the ability to utilize trehalose at high osmolarity by splitting it into glucose molecules that can subsequently be taken up by the phosphotransferase-mediated uptake system. The chain is Periplasmic trehalase from Shigella dysenteriae serotype 1 (strain Sd197).